We begin with the raw amino-acid sequence, 288 residues long: Stomatin (288 aa).

The tract at residues 1–22 is disordered; sequence MAEKRHTRDSEAQRLPDSFKDS. The Cytoplasmic segment spans residues 1 to 25; it reads MAEKRHTRDSEAQRLPDSFKDSPSK. Ser-10 carries the post-translational modification Phosphoserine; by PKA. A Phosphoserine modification is found at Ser-18. Residues 26–54 lie within the membrane without spanning it; that stretch reads GLGPCGWILVAFSFLFTVITFPISIWMCI. The S-palmitoyl cysteine moiety is linked to residue Cys-30. Residues 55 to 288 lie on the Cytoplasmic side of the membrane; it reads KIIKEYERAI…IIGAKHSHLG (234 aa). Cys-87 carries S-palmitoyl cysteine; partial lipidation. Phosphoserine occurs at positions 161 and 244. A required for homooligomerization region spans residues 265–273; sequence STIVFPLPI. The required for lipid raft association stretch occupies residues 267–269; sequence IVF. The interval 273 to 287 is interaction with LANCL1; sequence IDMLQGIIGAKHSHL.

Belongs to the band 7/mec-2 family. As to quaternary structure, homodimer and higher order homooligomer. The homodimer is banana-shaped. Interacts with ASIC1, ASIC2 and ASIC3. Interacts with LANCL1. Interacts with SLC2A1. Interacts with SLC4A1; this interaction positively regulates SLC4A1 activity. Identified in large complexes with SLC40A1, SLC14A1, SLC29A1 and AQP1. Interacts with STOML1; may redistribute STOM from the plasma membrane to late endosomes. In terms of tissue distribution, detected in erythrocytes (at protein level). Widely expressed.

It is found in the cell membrane. The protein resides in the cytoplasm. Its subcellular location is the cytoskeleton. It localises to the membrane raft. The protein localises to the melanosome. It is found in the cytoplasmic vesicle. In terms of biological role, regulates ion channel activity and transmembrane ion transport. Regulates ASIC2 and ASIC3 channel activity. This is Stomatin from Homo sapiens (Human).